We begin with the raw amino-acid sequence, 167 residues long: MEDTYIDSLDPEKLLQCPYDKNHQIRACRFPYHLIKCRKNHPDVANKLATCPFNARHQVPRAEISHHISSCDDKSCIEQDVVNQTRNLGQETLAESTWQCPPCDEDWDKDLWEQTSTPFVWGTASFCGNNSPANNIVMEHKSNLASGMRVPKSLPYVLPWKNNGNAQ.

Residue Ser-8 is modified to Phosphoserine. CHHC U11-48K-type zinc fingers lie at residues 14–41 (LLQC…RKNH) and 48–75 (LATC…DDKS). Cys-17, His-23, His-33, Cys-37, Cys-51, His-57, His-67, and Cys-71 together coordinate Zn(2+).

It belongs to the UPF0224 (FAM112) family. Expressed abundantly in adult testis, at moderate levels in unfertilized eggs and ovaries and weakly in embryonic stem cells.

The protein localises to the cytoplasm. Its function is as follows. Required for spermatogenesis and is involved in the suppression of retrotransposon transcription in male germ cells. The polypeptide is Gametocyte-specific factor 1 (Mus musculus (Mouse)).